The primary structure comprises 92 residues: Putative phosphotransferase enzyme IIB component BB_0367 (92 aa).

The region spanning 10–92 is the PTS EIIB type-1 domain; that stretch reads IKVAEHIVEC…ILYMMNEQKQ (83 aa).

The protein resides in the cytoplasm. Functionally, the phosphoenolpyruvate-dependent sugar phosphotransferase system (PTS), a major carbohydrate active -transport system, catalyzes the phosphorylation of incoming sugar substrates concomitant with their translocation across the cell membrane. In Borreliella burgdorferi (strain ATCC 35210 / DSM 4680 / CIP 102532 / B31) (Borrelia burgdorferi), this protein is Putative phosphotransferase enzyme IIB component BB_0367.